Consider the following 247-residue polypeptide: 6-phosphogluconolactonase (247 aa).

This sequence belongs to the glucosamine/galactosamine-6-phosphate isomerase family. 6-phosphogluconolactonase subfamily.

The enzyme catalyses 6-phospho-D-glucono-1,5-lactone + H2O = 6-phospho-D-gluconate + H(+). It participates in carbohydrate degradation; pentose phosphate pathway; D-ribulose 5-phosphate from D-glucose 6-phosphate (oxidative stage): step 2/3. Functionally, hydrolysis of 6-phosphogluconolactone to 6-phosphogluconate. The chain is 6-phosphogluconolactonase (pgl) from Mycobacterium bovis (strain ATCC BAA-935 / AF2122/97).